Reading from the N-terminus, the 326-residue chain is Guanine nucleotide-binding protein subunit beta-like protein 1 (326 aa).

WD repeat units follow at residues 17–61, 64–104, 159–202, 205–244, 250–291, and 292–325; these read GTQS…IVTT, GHGG…NTIM, ARPG…VCSQ, CHEE…SLQV, LTNP…AVLA, and FHSA…LYPC.

In terms of tissue distribution, expressed at low levels in most tissues and highly expressed in adult testis. Widely expressed in adult brain with striking regional distribution in forebrain, midbrain, and hindbrain structures, including the thalamus, hypothalamus, amygdala, hippocampus, pons.

The protein resides in the cytoplasm. It localises to the nucleus. Its function is as follows. Acts as a critical regulator of DNA damage response (DDR) signaling via specifically regulating phosphatidylinositol 3-kinase-related protein kinase (PIKK) family proteins. The chain is Guanine nucleotide-binding protein subunit beta-like protein 1 (Gnb1l) from Mus musculus (Mouse).